A 183-amino-acid polypeptide reads, in one-letter code: Capsid protein (183 aa).

Residues 150–183 (RQRGRTIRRRTPSPRRRRSQSPRRRRSQSRESQC) are disordered. Residues 151-176 (QRGRTIRRRTPSPRRRRSQSPRRRRS) show a composition bias toward basic residues. Residues 158–175 (RRTPSPRRRRSQSPRRRR) carry the Bipartite nuclear localization signal motif. 2 positions are modified to phosphoserine; by host: serine 162 and serine 170. 2 tandem repeats follow at residues 162 to 169 (SPRRRRSQ) and 170 to 177 (SPRRRRSQ). The segment at 162 to 177 (SPRRRRSQSPRRRRSQ) is 2 X 8 AA repeats of S-P-R-R-R-[PR]-S-Q. Residues 177–183 (QSRESQC) are RNA binding.

Belongs to the orthohepadnavirus core antigen family. Homodimerizes, then multimerizes. Interacts with cytosol exposed regions of viral L glycoprotein present in the reticulum-to-Golgi compartment. Interacts with human FLNB. Phosphorylated form interacts with host importin alpha; this interaction depends on the exposure of the NLS, which itself depends upon genome maturation and/or phosphorylation of the capsid protein. Interacts with host NUP153. Post-translationally, phosphorylated by host SRPK1, SRPK2, and maybe protein kinase C or GAPDH. Phosphorylation is critical for pregenomic RNA packaging. Protein kinase C phosphorylation is stimulated by HBx protein and may play a role in transport of the viral genome to the nucleus at the late step during the viral replication cycle.

The protein localises to the virion. Its subcellular location is the host cytoplasm. In terms of biological role, self assembles to form an icosahedral capsid. Most capsids appear to be large particles with an icosahedral symmetry of T=4 and consist of 240 copies of capsid protein, though a fraction forms smaller T=3 particles consisting of 180 capsid proteins. Entering capsids are transported along microtubules to the nucleus. Phosphorylation of the capsid is thought to induce exposure of nuclear localization signal in the C-terminal portion of the capsid protein that allows binding to the nuclear pore complex via the importin (karyopherin-) alpha and beta. Capsids are imported in intact form through the nuclear pore into the nuclear basket, where it probably binds NUP153. Only capsids that contain the mature viral genome can release the viral DNA and capsid protein into the nucleoplasm. Immature capsids get stuck in the basket. Capsids encapsulate the pre-genomic RNA and the P protein. Pre-genomic RNA is reverse-transcribed into DNA while the capsid is still in the cytoplasm. The capsid can then either be directed to the nucleus, providing more genomes for transcription, or bud through the endoplasmic reticulum to provide new virions. This is Capsid protein from Homo sapiens (Human).